Here is a 219-residue protein sequence, read N- to C-terminus: Small ribosomal subunit protein uS3c (219 aa).

Positions 47-118 (IKKNIRISSG…KINIAITRIT (72 aa)) constitute a KH type-2 domain.

The protein belongs to the universal ribosomal protein uS3 family. Part of the 30S ribosomal subunit.

It localises to the plastid. The protein resides in the chloroplast. The chain is Small ribosomal subunit protein uS3c (rps3) from Citrus sinensis (Sweet orange).